Consider the following 506-residue polypeptide: Protein P7 (506 aa).

RNA-binding stretches follow at residues 128–249 (ISYL…GKRE) and 325–355 (DGSY…FKIS).

The protein belongs to the phytoreovirus protein P7 family.

Its subcellular location is the virion. It is found in the host cytoplasm. Probable component of the transcriptional machinery present in the inner capsid. Displays dsRNA binding activity and may play an important role in the sorting of viral RNA and virion assembly. Together with the RNA-directed RNA polymerase P1 and capping enzyme P5, forms an transcriptional complex positioned near the channels situated at each of the five-fold vertices of the core. The sequence is that of Protein P7 from Alopecurus aequalis (Barnyard grass).